The primary structure comprises 622 residues: MSFDISKFPVLAKANTPEDLRKLPQNMLSQVSTELRQFLLQSVGNSSGHFASGLGTVELTVALHYVYNTPFDRLIWDVGHQAYPHKIMTGRRDEMHTIRQKNGLHPFPWREESEYDTFSVGHSGTSVSAALGMAIAADKEAAGRKVVAVIGDGAMTGGMVFEAMNHAGDLHKDMLVVLNDNEMSISENVGALNNHLAQLMSGRLYTTIREGSKKVLQGMPVIKEMAKRTEEHLKGMVVPGTLFEELGFNYIGPIDGHDVDALVETMRNMRSLKGPQILHIMTKKGRGYEPAEKDPIGWHAVPKFDPDQFKKPATKPGLPTFSQVFGKWLCDVAAQDDKLLAITPAMREGSGMVEFSQRFPEQYFDAAIAEQHAVTLAAGFACEGFKSVVAIYSTFLQRGYDQLIHDVALQRLPVLFAIDRGGIVGADGATHQGAFDLSFMRCIPNLVIMAPADENECRQMLYTGYRYQDGPTAVRYPRGFATGAEQIEQMTALPIGKGRVCRQGKKIAILNFGTTLASALEVAEQLDASVADMRFIKPLDVDLLHTLALEHDVIVTIEENAIMGGAGSGVIEALHKLKICKPVLQIGLPDEFIKHGAPDEIIAELRLDSKGILAQIQEYLSE.

Thiamine diphosphate-binding positions include His-80 and 121-123 (GHS). Position 152 (Asp-152) interacts with Mg(2+). Thiamine diphosphate-binding positions include 153–154 (GA), Asn-181, Tyr-288, and Glu-370. Mg(2+) is bound at residue Asn-181.

It belongs to the transketolase family. DXPS subfamily. As to quaternary structure, homodimer. Mg(2+) is required as a cofactor. The cofactor is thiamine diphosphate.

The enzyme catalyses D-glyceraldehyde 3-phosphate + pyruvate + H(+) = 1-deoxy-D-xylulose 5-phosphate + CO2. Its pathway is metabolic intermediate biosynthesis; 1-deoxy-D-xylulose 5-phosphate biosynthesis; 1-deoxy-D-xylulose 5-phosphate from D-glyceraldehyde 3-phosphate and pyruvate: step 1/1. Catalyzes the acyloin condensation reaction between C atoms 2 and 3 of pyruvate and glyceraldehyde 3-phosphate to yield 1-deoxy-D-xylulose-5-phosphate (DXP). This is 1-deoxy-D-xylulose-5-phosphate synthase from Shewanella denitrificans (strain OS217 / ATCC BAA-1090 / DSM 15013).